Here is a 165-residue protein sequence, read N- to C-terminus: Endoribonuclease YbeY (165 aa).

3 residues coordinate Zn(2+): H130, H134, and H140.

It belongs to the endoribonuclease YbeY family. Requires Zn(2+) as cofactor.

It is found in the cytoplasm. Its function is as follows. Single strand-specific metallo-endoribonuclease involved in late-stage 70S ribosome quality control and in maturation of the 3' terminus of the 16S rRNA. This is Endoribonuclease YbeY from Streptococcus pneumoniae serotype 2 (strain D39 / NCTC 7466).